The following is a 1749-amino-acid chain: Kinesin-like protein KIF13A (1749 aa).

In terms of domain architecture, Kinesin motor spans 5-352; that stretch reads KVKVAVRVRP…LRYADRAKRI (348 aa). 102-109 provides a ligand contact to ATP; that stretch reads GQTGSGKS. Residues 359–431 are a coiled coil; sequence NEDPNAKVIR…QERQRQLESM (73 aa). An FHA domain is found at 469–519; sequence HTRVGADTSQDIQLFGIGIQPEHCEIDIAADGDITLTPKENARSCVNGTLV. The stretch at 552–775 forms a coiled coil; sequence LKDFERETSS…VPEAKRLYGK (224 aa). Disordered stretches follow at residues 633–652 and 834–853; these read QQLS…LAYS and IPER…SGSL. At Ser636 the chain carries Phosphoserine. Positions 1086-1126 form a coiled coil; that stretch reads SDALIKRREYLDEQIKKVSNKKEKTEDDMEREARLVEQWVG. At Ser1274 the chain carries Phosphoserine. The span at 1370–1383 shows a compositional bias: polar residues; sequence LSTPNVHNVSSSRP. Disordered regions lie at residues 1370–1402 and 1417–1436; these read LSTP…QLDV and TLPR…ENPH. A compositionally biased stretch (basic and acidic residues) spans 1421 to 1430; it reads DSPRRSKEGC. A phosphoserine mark is found at Ser1441, Ser1477, Ser1481, Ser1524, Ser1600, and Ser1650. Positions 1475–1499 form a coiled coil; the sequence is LLSQEDSEEEENELEALSRKLMLTQ. Disordered stretches follow at residues 1584 to 1665 and 1698 to 1749; these read CAEP…GHQA and DFDG…TATR. Over residues 1719–1741 the composition is skewed to basic and acidic residues; that stretch reads ETDHKGIPERPPDADRLHPKIEN.

It belongs to the TRAFAC class myosin-kinesin ATPase superfamily. Kinesin family. As to quaternary structure, interacts with AP1G1 and AP1G2. Interacts with ZFYVE26. Interacts with AP2B1.

The protein resides in the golgi apparatus membrane. Its subcellular location is the cytoplasm. The protein localises to the cytoskeleton. It is found in the microtubule organizing center. It localises to the centrosome. The protein resides in the midbody. Its subcellular location is the endosome membrane. Functionally, plus end-directed microtubule-dependent motor protein involved in intracellular transport and regulating various processes such as mannose-6-phosphate receptor (M6PR) transport to the plasma membrane, endosomal sorting during melanosome biogenesis and cytokinesis. During melanosome maturation, required for delivering melanogenic enzymes from recycling endosomes to nascent melanosomes by creating peripheral recycling endosomal subdomains in melanocytes. Also required for the abscission step in cytokinesis: mediates translocation of ZFYVE26, and possibly TTC19, to the midbody during cytokinesis. Mediates the transport of M6PR-containing vesicles from trans-Golgi network to the plasma membrane via direct interaction with the AP-1 complex. The polypeptide is Kinesin-like protein KIF13A (Kif13a) (Mus musculus (Mouse)).